A 51-amino-acid polypeptide reads, in one-letter code: Insulin (51 aa).

3 cysteine pairs are disulfide-bonded: Cys7/Cys37, Cys19/Cys50, and Cys36/Cys41.

It belongs to the insulin family. In terms of assembly, heterodimer of a B chain and an A chain linked by two disulfide bonds.

The protein resides in the secreted. Functionally, insulin decreases blood glucose concentration. It increases cell permeability to monosaccharides, amino acids and fatty acids. It accelerates glycolysis, the pentose phosphate cycle, and glycogen synthesis in liver. In Meleagris gallopavo (Wild turkey), this protein is Insulin (INS).